The following is a 210-amino-acid chain: MGVRAQQKEKTRRSLVEAAFSQLSAERSFASLSLREVAREAGIAPTSFYRHFRDVDELGLTMVDESGLMLRQLMRQARQRIAKGGSVIRTSVSTFMEFIGNNPNAFRLLLRERSGTSAAFRAAVAREIQHFIAELADYLELENHMPRAFTEAQAEAMVTIVFSAGAEALDIGAEQRRQLEERLVLQLRMIAKGAYYWYRREQEKIAHHSE.

The HTH tetR-type domain occupies 10-70 (KTRRSLVEAA…TMVDESGLML (61 aa)). Positions 33-52 (SLREVAREAGIAPTSFYRHF) form a DNA-binding region, H-T-H motif.

In terms of assembly, homodimer.

The protein resides in the cytoplasm. Its function is as follows. Represses the transcription of fabB, involved in unsaturated fatty acid (UFA) biosynthesis. By controlling UFA production, FabR directly influences the physical properties of the membrane bilayer. The sequence is that of HTH-type transcriptional repressor FabR from Salmonella choleraesuis (strain SC-B67).